We begin with the raw amino-acid sequence, 348 residues long: tRNA N6-adenosine threonylcarbamoyltransferase (348 aa).

Fe cation is bound by residues histidine 114 and histidine 118. Residues 137–141 (LVSGG), aspartate 171, glycine 184, aspartate 188, and asparagine 283 each bind substrate. A Fe cation-binding site is contributed by aspartate 311.

The protein belongs to the KAE1 / TsaD family. Fe(2+) is required as a cofactor.

The protein resides in the cytoplasm. The enzyme catalyses L-threonylcarbamoyladenylate + adenosine(37) in tRNA = N(6)-L-threonylcarbamoyladenosine(37) in tRNA + AMP + H(+). Functionally, required for the formation of a threonylcarbamoyl group on adenosine at position 37 (t(6)A37) in tRNAs that read codons beginning with adenine. Is involved in the transfer of the threonylcarbamoyl moiety of threonylcarbamoyl-AMP (TC-AMP) to the N6 group of A37, together with TsaE and TsaB. TsaD likely plays a direct catalytic role in this reaction. The sequence is that of tRNA N6-adenosine threonylcarbamoyltransferase from Nocardioides sp. (strain ATCC BAA-499 / JS614).